The following is a 636-amino-acid chain: MEGPAFSKPLKDKINPWGPLIILGILIRAGVSVQHDSPHQVFNVTWRVTNLMTGQTANATSLLGTMTDAFPKLYFDLCDLIGDDWDETGLGCRTPGGRKRARTFDFYVCPGHTVPTGCGGPREGYCGKWGCETTGQAYWKPSSSWDLISLKRGNTPRNQGPCYDSSVVSSGIQGATPGGRCNPLVLEFTDAGKKASWDGPKVWGLRLYRSTGIDPVTRFSLTRQVLNIGPRLPIGPNPVITGQLPPSRPVQIRLPRPPQPPPPGAASIVPETAPPSQQPGTGDRLLNLVDGAYQALNLTSPDKTQECWLCLVAGPPYYEGVAVLGTYSNHTSAPANCSVASQHKLTLSEVTGQGLCVGAVPKTHQALCNTTQKTSDGSYYLAAPAGTIWACNTGLTPCLSTTVLNLTTDYCVLVELWPKVTYHSPDYVYTQFEPGARFRREPVSLTLALLLGGLTMGGIAAGVGTGTTALVATQQFQQLQAAVHNDLKEVEKSITNLEKSLTSLSEVALQNRRGLDLLFLKEGGLCAALKEECCFYADHTGLVRDSMAKLRERLNQRQKLFESGQGWFEGLFNRSPWFTTLISTIMGPLIVLLLILLFGPCILNRLVQFVKDRISVVQALVLTQQYHQLKPIEYEP.

The first 32 residues, 1–32, serve as a signal peptide directing secretion; it reads MEGPAFSKPLKDKINPWGPLIILGILIRAGVS. The interval 32 to 233 is receptor-binding domain (RBD); it reads SVQHDSPHQV…QVLNIGPRLP (202 aa). Topologically, residues 33 to 581 are extracellular; the sequence is VQHDSPHQVF…FNRSPWFTTL (549 aa). Residues N43 and N58 are each glycosylated (N-linked (GlcNAc...) asparagine; by host). 2 disulfides stabilise this stretch: C109–C126 and C118–C131. Positions 254-282 are disordered; it reads LPRPPQPPPPGAASIVPETAPPSQQPGTG. Residues 255 to 264 show a composition bias toward pro residues; sequence PRPPQPPPPG. The N-linked (GlcNAc...) asparagine; by host glycan is linked to N297. 6 cysteine pairs are disulfide-bonded: C307/C310, C307/C534, C337/C391, C356/C368, C398/C411, and C526/C533. The short motif at 307–310 is the CXXC element; that stretch reads CWLC. Residues N329 and N336 are each glycosylated (N-linked (GlcNAc...) asparagine; by host). N-linked (GlcNAc...) asparagine; by host glycans are attached at residues N369 and N405. The tract at residues 443-463 is fusion peptide; that stretch reads VSLTLALLLGGLTMGGIAAGV. Residues 472-508 are a coiled coil; that stretch reads ATQQFQQLQAAVHNDLKEVEKSITNLEKSLTSLSEVA. The immunosuppression stretch occupies residues 509-525; it reads LQNRRGLDLLFLKEGGL. Positions 526-534 match the CX6CC motif; sequence CAALKEECC. The chain crosses the membrane as a helical span at residues 582–602; sequence ISTIMGPLIVLLLILLFGPCI. C601 carries the S-palmitoyl cysteine; by host lipid modification. The Cytoplasmic portion of the chain corresponds to 603–636; sequence LNRLVQFVKDRISVVQALVLTQQYHQLKPIEYEP. The short motif at 626–629 is the YXXL motif; contains endocytosis signal element; the sequence is YHQL.

The mature envelope protein (Env) consists of a trimer of SU-TM heterodimers attached by a labile interchain disulfide bond. In terms of processing, specific enzymatic cleavages in vivo yield mature proteins. Envelope glycoproteins are synthesized as an inactive precursor that is N-glycosylated and processed likely by host cell furin or by a furin-like protease in the Golgi to yield the mature SU and TM proteins. The cleavage site between SU and TM requires the minimal sequence [KR]-X-[KR]-R. The R-peptide is released from the C-terminus of the cytoplasmic tail of the TM protein upon particle formation as a result of proteolytic cleavage by the viral protease. Cleavage of this peptide is required for TM to become fusogenic. Post-translationally, the CXXC motif is highly conserved across a broad range of retroviral envelope proteins. It is thought to participate in the formation of a labile disulfide bond possibly with the CX6CC motif present in the transmembrane protein. Isomerization of the intersubunit disulfide bond to an SU intrachain disulfide bond is thought to occur upon receptor recognition in order to allow membrane fusion. The transmembrane protein is palmitoylated. In terms of processing, the R-peptide is palmitoylated.

Its subcellular location is the virion membrane. The protein resides in the host cell membrane. In terms of biological role, the surface protein (SU) attaches the virus to the host cell by binding to its receptor. This interaction triggers the refolding of the transmembrane protein (TM) and is thought to activate its fusogenic potential by unmasking its fusion peptide. Fusion occurs at the host cell plasma membrane. Its function is as follows. The transmembrane protein (TM) acts as a class I viral fusion protein. Under the current model, the protein has at least 3 conformational states: pre-fusion native state, pre-hairpin intermediate state, and post-fusion hairpin state. During viral and target cell membrane fusion, the coiled coil regions (heptad repeats) assume a trimer-of-hairpins structure, positioning the fusion peptide in close proximity to the C-terminal region of the ectodomain. The formation of this structure appears to drive apposition and subsequent fusion of viral and target cell membranes. Membranes fusion leads to delivery of the nucleocapsid into the cytoplasm. This chain is Envelope glycoprotein (env), found in Mus musculus (Mouse).